The chain runs to 498 residues: MNENTKVIKGRTGDWEMVLGLEVHAQVASKSKLFSGAAVGFGAGPNEQVSLVDAAMPGMLPVLNRFCVEQAVKTGLGLRAQINLKSRFDRKNYFYPDLPQGYQISQFDQPIVGEGVVSVERDDGTTFDVRIERLHLEQDAGKSLHDQDPNATYVDLNRAGTALMEIVSKPDMRTSEEAAAYVKKLRTILVYLGTCDGDMEKGNLRADVNVSVCRPGDYEKFRATGDFKHLGTRCEIKNVNSYRYIQQAIEYEARRQIEILEDGGKVDQETRLFDPTKGETRSMRSKEEAHDYRYFPDPDLLPLVLDPAWVKSIEETLPELPDAKKARLQSQYGLSAYDAGVLIIDADRADYFEAAAKGRDAKLVANWVTNELLAKLSAAGTEFTNSPLPHTDIAQLVELIENGTISSKIAKEVFEHMWAGEGRPAEIVEKRGLVQINDTGAIEKAIDDLIAGNPDKAEAVKDKPQALGWFVGQVMKATGGKANPGTVNELLRKKLGVE.

The protein belongs to the GatB/GatE family. GatB subfamily. As to quaternary structure, heterotrimer of A, B and C subunits.

It carries out the reaction L-glutamyl-tRNA(Gln) + L-glutamine + ATP + H2O = L-glutaminyl-tRNA(Gln) + L-glutamate + ADP + phosphate + H(+). The enzyme catalyses L-aspartyl-tRNA(Asn) + L-glutamine + ATP + H2O = L-asparaginyl-tRNA(Asn) + L-glutamate + ADP + phosphate + 2 H(+). Functionally, allows the formation of correctly charged Asn-tRNA(Asn) or Gln-tRNA(Gln) through the transamidation of misacylated Asp-tRNA(Asn) or Glu-tRNA(Gln) in organisms which lack either or both of asparaginyl-tRNA or glutaminyl-tRNA synthetases. The reaction takes place in the presence of glutamine and ATP through an activated phospho-Asp-tRNA(Asn) or phospho-Glu-tRNA(Gln). In Caulobacter vibrioides (strain ATCC 19089 / CIP 103742 / CB 15) (Caulobacter crescentus), this protein is Aspartyl/glutamyl-tRNA(Asn/Gln) amidotransferase subunit B.